Here is a 173-residue protein sequence, read N- to C-terminus: Transcriptional repressor NrdR (173 aa).

A zinc finger lies at 3 to 34 (CPYCGSLDTQVKDSRPTEDNTAIRRRRVCPDC). The ATP-cone domain maps to 49–139 (LMVVKRSGRR…VYRNFREARD (91 aa)).

It belongs to the NrdR family. Requires Zn(2+) as cofactor.

Its function is as follows. Negatively regulates transcription of bacterial ribonucleotide reductase nrd genes and operons by binding to NrdR-boxes. The polypeptide is Transcriptional repressor NrdR (Azorhizobium caulinodans (strain ATCC 43989 / DSM 5975 / JCM 20966 / LMG 6465 / NBRC 14845 / NCIMB 13405 / ORS 571)).